The chain runs to 384 residues: Glucose-fructose oxidoreductase domain-containing protein 2 (384 aa).

Positions 1 to 25 (MMTLPGIGVFGTGNTARVLIQLLRA) are cleaved as a signal peptide. The tract at residues 358-384 (GEWESVELTNEETDSNQNLSEVIQHNL) is disordered. The span at 372 to 384 (SNQNLSEVIQHNL) shows a compositional bias: polar residues.

It belongs to the Gfo/Idh/MocA family.

The protein resides in the secreted. Its subcellular location is the extracellular space. The protein localises to the extracellular matrix. Its function is as follows. Promotes matrix assembly. This Xenopus laevis (African clawed frog) protein is Glucose-fructose oxidoreductase domain-containing protein 2 (gfod2).